The following is a 124-amino-acid chain: Small ribosomal subunit protein uS12 (124 aa).

Asp89 bears the 3-methylthioaspartic acid mark.

Belongs to the universal ribosomal protein uS12 family. As to quaternary structure, part of the 30S ribosomal subunit. Contacts proteins S8 and S17. May interact with IF1 in the 30S initiation complex.

With S4 and S5 plays an important role in translational accuracy. Functionally, interacts with and stabilizes bases of the 16S rRNA that are involved in tRNA selection in the A site and with the mRNA backbone. Located at the interface of the 30S and 50S subunits, it traverses the body of the 30S subunit contacting proteins on the other side and probably holding the rRNA structure together. The combined cluster of proteins S8, S12 and S17 appears to hold together the shoulder and platform of the 30S subunit. This Buchnera aphidicola subsp. Schizaphis graminum (strain Sg) protein is Small ribosomal subunit protein uS12.